The following is a 324-amino-acid chain: Quinolinate synthase 2 (324 aa).

Iminosuccinate contacts are provided by His-48 and Ser-66. Residue Cys-111 coordinates [4Fe-4S] cluster. Iminosuccinate is bound by residues 137–139 (YVN) and Ser-154. Cys-196 serves as a coordination point for [4Fe-4S] cluster. Residues 222 to 224 (HPE) and Thr-239 contribute to the iminosuccinate site. Cys-282 serves as a coordination point for [4Fe-4S] cluster.

Belongs to the quinolinate synthase family. Type 2 subfamily. It depends on [4Fe-4S] cluster as a cofactor.

It localises to the cytoplasm. The enzyme catalyses iminosuccinate + dihydroxyacetone phosphate = quinolinate + phosphate + 2 H2O + H(+). It participates in cofactor biosynthesis; NAD(+) biosynthesis; quinolinate from iminoaspartate: step 1/1. Functionally, catalyzes the condensation of iminoaspartate with dihydroxyacetone phosphate to form quinolinate. This chain is Quinolinate synthase 2, found in Mesorhizobium japonicum (strain LMG 29417 / CECT 9101 / MAFF 303099) (Mesorhizobium loti (strain MAFF 303099)).